The sequence spans 1002 residues: Probable transport protein MmpL10 (1002 aa).

12 consecutive transmembrane segments (helical) span residues 1-21, 177-197, 199-219, 228-248, 268-288, 306-326, 358-378, 806-826, 835-855, 862-882, 901-921, and 923-943; these read MVGC…SLAE, IAVM…TMLL, LVTI…VSLV, AIVL…VFLI, AMMS…ITFL, AIGI…ILVL, YLGA…LAHF, IVAV…RAIV, VVIS…VFLG, VPGL…MLLA, VRCT…SMSG, and LFSS…GILI.

It belongs to the resistance-nodulation-cell division (RND) (TC 2.A.6) family. MmpL subfamily.

The protein localises to the cell membrane. The protein is Probable transport protein MmpL10 (mmpL10) of Mycobacterium bovis (strain ATCC BAA-935 / AF2122/97).